The following is a 680-amino-acid chain: DNA-directed RNA polymerase subunit beta' (680 aa).

Zn(2+) contacts are provided by C69, C71, C87, and C90. Mg(2+) is bound by residues D489, D491, and D493.

This sequence belongs to the RNA polymerase beta' chain family. RpoC1 subfamily. As to quaternary structure, in plastids the minimal PEP RNA polymerase catalytic core is composed of four subunits: alpha, beta, beta', and beta''. When a (nuclear-encoded) sigma factor is associated with the core the holoenzyme is formed, which can initiate transcription. It depends on Mg(2+) as a cofactor. Zn(2+) is required as a cofactor.

It localises to the plastid. The protein localises to the chloroplast. The enzyme catalyses RNA(n) + a ribonucleoside 5'-triphosphate = RNA(n+1) + diphosphate. Its function is as follows. DNA-dependent RNA polymerase catalyzes the transcription of DNA into RNA using the four ribonucleoside triphosphates as substrates. The protein is DNA-directed RNA polymerase subunit beta' of Nandina domestica (Heavenly bamboo).